The chain runs to 380 residues: Cytochrome b (380 aa).

A run of 4 helical transmembrane segments spans residues 34–54, 78–99, 114–134, and 179–199; these read FGSL…LLAM, WLIR…YLHI, WNTG…GYVL, and FFAL…IHLT. H84 and H98 together coordinate heme b. Positions 183 and 197 each coordinate heme b. H202 contacts a ubiquinone. A run of 4 helical transmembrane segments spans residues 227–247, 289–309, 321–341, and 348–368; these read IKDI…ALFS, LGGV…PFLH, FSQL…WVGS, and FIII…ILFP.

It belongs to the cytochrome b family. The cytochrome bc1 complex contains 11 subunits: 3 respiratory subunits (MT-CYB, CYC1 and UQCRFS1), 2 core proteins (UQCRC1 and UQCRC2) and 6 low-molecular weight proteins (UQCRH/QCR6, UQCRB/QCR7, UQCRQ/QCR8, UQCR10/QCR9, UQCR11/QCR10 and a cleavage product of UQCRFS1). This cytochrome bc1 complex then forms a dimer. Requires heme b as cofactor.

Its subcellular location is the mitochondrion inner membrane. Functionally, component of the ubiquinol-cytochrome c reductase complex (complex III or cytochrome b-c1 complex) that is part of the mitochondrial respiratory chain. The b-c1 complex mediates electron transfer from ubiquinol to cytochrome c. Contributes to the generation of a proton gradient across the mitochondrial membrane that is then used for ATP synthesis. The protein is Cytochrome b (MT-CYB) of Numida meleagris (Helmeted guineafowl).